Here is a 209-residue protein sequence, read N- to C-terminus: MERKVFSKDGKEIGTINLDDRVFNIEISHGSIYNAIKNELSNLRVGTSSTKTRSEVRGSSKKPWKQKGTGRARVGTKRNPVWIGGGIALGPKPRDYSYRLPKKVKKLAFKSVLSLRAADENSFKVIENFNVESGKTKDLALIIKNFASFNGKVVILLGNDDQMIKRAGKNIRDLKILSFDKLRVVDLFYAKNLIALESAVNKLNEFYIK.

The disordered stretch occupies residues 46–72 (GTSSTKTRSEVRGSSKKPWKQKGTGRA). Positions 59–72 (SSKKPWKQKGTGRA) are enriched in basic residues.

This sequence belongs to the universal ribosomal protein uL4 family. As to quaternary structure, part of the 50S ribosomal subunit.

Its function is as follows. One of the primary rRNA binding proteins, this protein initially binds near the 5'-end of the 23S rRNA. It is important during the early stages of 50S assembly. It makes multiple contacts with different domains of the 23S rRNA in the assembled 50S subunit and ribosome. Functionally, forms part of the polypeptide exit tunnel. The polypeptide is Large ribosomal subunit protein uL4 (Borreliella burgdorferi (strain ATCC 35210 / DSM 4680 / CIP 102532 / B31) (Borrelia burgdorferi)).